Reading from the N-terminus, the 435-residue chain is GTPase Obg (435 aa).

Residues 1 to 158 enclose the Obg domain; sequence MFIDRAKIYV…RWLYLELKLL (158 aa). An OBG-type G domain is found at 159-328; sequence ADVGLVGLPN…LLELMEKYVR (170 aa). Residues 165–172, 190–194, 211–214, 280–283, and 309–311 each bind GTP; these read GLPNAGKS, FTTKT, DIPG, NKID, and SAK. Mg(2+) is bound by residues serine 172 and threonine 192. In terms of domain architecture, OCT spans 343-426; it reads IQETKEGRVE…IGDYIFKYNA (84 aa).

It belongs to the TRAFAC class OBG-HflX-like GTPase superfamily. OBG GTPase family. In terms of assembly, monomer. The cofactor is Mg(2+).

Its subcellular location is the cytoplasm. Its function is as follows. An essential GTPase which binds GTP, GDP and possibly (p)ppGpp with moderate affinity, with high nucleotide exchange rates and a fairly low GTP hydrolysis rate. Plays a role in control of the cell cycle, stress response, ribosome biogenesis and in those bacteria that undergo differentiation, in morphogenesis control. This Dictyoglomus thermophilum (strain ATCC 35947 / DSM 3960 / H-6-12) protein is GTPase Obg.